The sequence spans 810 residues: Nuclear pore complex protein NUP88 (810 aa).

Residues 1 to 23 (MKFNFNETEDAPDSRRSPTPKEP) form a disordered region. A coiled-coil region spans residues 646-748 (APNLKRIIDD…RARVKKSTQK (103 aa)).

Part of the nuclear pore complex (NPC). The NPC has an eight-fold symmetrical structure comprising a central transport channel and two rings, the cytoplasmic and nuclear rings, to which eight filaments are attached. The cytoplasmic filaments have loose ends, while the nuclear filaments are joined in a distal ring, forming a nuclear basket. NPCs are highly dynamic in configuration and composition, and can be devided in 3 subcomplexes, the NUP62 subcomplex, the NUP107-160 subcomplex and the NUP93 subcomplex, containing approximately 30 different nucleoporin proteins.

The protein resides in the nucleus envelope. It is found in the nucleus. The protein localises to the nuclear pore complex. In terms of biological role, involved in the regulation of exportin-mediated nuclear protein export. Required for resistance mediated by multiple R proteins and for the appropriate nuclear accumulation of SNC1 and of the downstream defense signaling components EDS1 and NPR1. Not involved in salt tolerance, ethylene and auxin responses, but required for systemic acquired resistance. This is Nuclear pore complex protein NUP88 from Arabidopsis thaliana (Mouse-ear cress).